Consider the following 47-residue polypeptide: Ruminococcin-A (47 aa).

The first 23 residues, 1–23 (MRNDVLTLTNPMEEKELEQILGG), serve as a signal peptide directing secretion. Residues Thr30 and Thr39 each carry the 2,3-didehydrobutyrine modification. A cross-link (beta-methyllanthionine (Thr-Cys)) is located at residues 30 to 35 (TISHEC). The lanthionine (Ser-Cys) cross-link spans 32–46 (SHECNMNTWQFLFTC). Positions 45-47 (TCC) form a cross-link, beta-methyllanthionine (Thr-Cys).

Post-translationally, maturation of lantibiotics involves the enzymatic conversion of Thr, and Ser into dehydrated AA and the formation of thioether bonds with cysteine. This is followed by membrane translocation and cleavage of the modified precursor. In terms of processing, it is not established whether the 2,3-didehydrobutyrine is the E- or Z-isomer.

The protein localises to the secreted. Lanthionine-containing peptide antibiotic (lantibiotic) active on Gram-positive bacteria. The bactericidal activity of lantibiotics is based on depolarization of energized bacterial cytoplasmic membranes, initiated by the formation of aqueous transmembrane pores. Ruminococcin A is a broad spectrum bacteriocin exhibiting activity against a wide range of pathogenic clostridia and B.longum. The chain is Ruminococcin-A (rumA1) from Mediterraneibacter gnavus (Ruminococcus gnavus).